The sequence spans 204 residues: MFVLVEMVDTVRIPPWQFERKLNDSIDEELNKKLANKVMYNVGLCICLFDITKLEDAYVFPGDGASHTKVHFRYVVFHPFLDEILIGKIKGCSPEGVHVSLGFFDDILIPPESLQQPAKFDEAEQVWVWEYETEEGAHDLYMDIGEEVRFRVVDESFVDTSPTGPSSAEAASSSEELPKKEAPYTLMGSISEPGLGLLSWWTSS.

The interval valine 158–proline 178 is disordered. A compositionally biased stretch (low complexity) spans serine 166 to glutamate 175.

The protein belongs to the eukaryotic RPB7/RPC8 RNA polymerase subunit family. In terms of assembly, component of the RNA polymerase III complex consisting of 17 subunits: a ten-subunit horseshoe-shaped catalytic core composed of POLR3A/RPC1, POLR3B/RPC2, POLR1C/RPAC1, POLR1D/RPAC2, POLR3K/RPC10, POLR2E/RPABC1, POLR2F/RPABC2, POLR2H/RPABC3, POLR2K/RPABC4 and POLR2L/RPABC5; a mobile stalk composed of two subunits POLR3H/RPC8 and CRCP/RPC9, protruding from the core and functioning primarily in transcription initiation; and additional subunits homologous to general transcription factors of the RNA polymerase II machinery, POLR3C/RPC3-POLR3F/RPC6-POLR3G/RPC7 heterotrimer required for transcription initiation and POLR3D/RPC4-POLR3E/RPC5 heterodimer involved in both transcription initiation and termination. Interacts with CRCP/RPC9. POLR3H/RPC8 and CRCP/RPC9 probably form a Pol III subcomplex.

The protein localises to the nucleus. In terms of biological role, DNA-dependent RNA polymerase catalyzes the transcription of DNA into RNA using the four ribonucleoside triphosphates as substrates. Specific peripheric component of RNA polymerase III (Pol III) which synthesizes small non-coding RNAs including 5S rRNA, snRNAs, tRNAs and miRNAs from at least 500 distinct genomic loci. With CRCP/RPC9 forms a mobile stalk that protrudes from Pol III core and functions primarily in transcription initiation. Pol III plays a key role in sensing and limiting infection by intracellular bacteria and DNA viruses. Acts as nuclear and cytosolic DNA sensor involved in innate immune response. Can sense non-self dsDNA that serves as template for transcription into dsRNA. The non-self RNA polymerase III transcripts, such as Epstein-Barr virus-encoded RNAs (EBERs) induce type I interferon and NF-kappa-B through the RIG-I pathway. The polypeptide is DNA-directed RNA polymerase III subunit RPC8 (POLR3H) (Bos taurus (Bovine)).